Consider the following 338-residue polypeptide: Phenylalanine--tRNA ligase alpha subunit (338 aa).

Glu252 contacts Mg(2+).

The protein belongs to the class-II aminoacyl-tRNA synthetase family. Phe-tRNA synthetase alpha subunit type 1 subfamily. As to quaternary structure, tetramer of two alpha and two beta subunits. Mg(2+) serves as cofactor.

Its subcellular location is the cytoplasm. It carries out the reaction tRNA(Phe) + L-phenylalanine + ATP = L-phenylalanyl-tRNA(Phe) + AMP + diphosphate + H(+). The protein is Phenylalanine--tRNA ligase alpha subunit of Pseudomonas syringae pv. syringae (strain B728a).